The primary structure comprises 241 residues: ATP synthase subunit a (241 aa).

Transmembrane regions (helical) follow at residues 30–50, 91–111, 128–148, 193–213, and 214–234; these read GQVFMTSWIVIGAILALVVVG, FIGTLFLFIFVSNWGGSLVPW, INTTVALALLVSLSYFYAGLS, LVVAVLVFLVPLFLPVPVMFL, and GLFTSAIQALIFATLAAYYIG.

This sequence belongs to the ATPase A chain family. In terms of assembly, F-type ATPases have 2 components, CF(1) - the catalytic core - and CF(0) - the membrane proton channel. CF(1) has five subunits: alpha(3), beta(3), gamma(1), delta(1), epsilon(1). CF(0) has four main subunits: a, b, b' and c.

The protein localises to the cellular thylakoid membrane. Functionally, key component of the proton channel; it plays a direct role in the translocation of protons across the membrane. This is ATP synthase subunit a from Prochlorococcus marinus (strain MIT 9313).